The sequence spans 332 residues: Lipoyl synthase (332 aa).

[4Fe-4S] cluster-binding residues include cysteine 55, cysteine 60, cysteine 66, cysteine 81, cysteine 85, cysteine 88, and serine 292. Residues tryptophan 67–leucine 281 enclose the Radical SAM core domain.

Belongs to the radical SAM superfamily. Lipoyl synthase family. Requires [4Fe-4S] cluster as cofactor.

It localises to the cytoplasm. The enzyme catalyses [[Fe-S] cluster scaffold protein carrying a second [4Fe-4S](2+) cluster] + N(6)-octanoyl-L-lysyl-[protein] + 2 oxidized [2Fe-2S]-[ferredoxin] + 2 S-adenosyl-L-methionine + 4 H(+) = [[Fe-S] cluster scaffold protein] + N(6)-[(R)-dihydrolipoyl]-L-lysyl-[protein] + 4 Fe(3+) + 2 hydrogen sulfide + 2 5'-deoxyadenosine + 2 L-methionine + 2 reduced [2Fe-2S]-[ferredoxin]. The protein operates within protein modification; protein lipoylation via endogenous pathway; protein N(6)-(lipoyl)lysine from octanoyl-[acyl-carrier-protein]: step 2/2. Catalyzes the radical-mediated insertion of two sulfur atoms into the C-6 and C-8 positions of the octanoyl moiety bound to the lipoyl domains of lipoate-dependent enzymes, thereby converting the octanoylated domains into lipoylated derivatives. This is Lipoyl synthase from Beutenbergia cavernae (strain ATCC BAA-8 / DSM 12333 / CCUG 43141 / JCM 11478 / NBRC 16432 / NCIMB 13614 / HKI 0122).